Reading from the N-terminus, the 189-residue chain is Probable nicotinate-nucleotide adenylyltransferase (189 aa).

Belongs to the NadD family.

The enzyme catalyses nicotinate beta-D-ribonucleotide + ATP + H(+) = deamido-NAD(+) + diphosphate. It functions in the pathway cofactor biosynthesis; NAD(+) biosynthesis; deamido-NAD(+) from nicotinate D-ribonucleotide: step 1/1. In terms of biological role, catalyzes the reversible adenylation of nicotinate mononucleotide (NaMN) to nicotinic acid adenine dinucleotide (NaAD). The protein is Probable nicotinate-nucleotide adenylyltransferase of Bacillus cereus (strain AH187).